The sequence spans 466 residues: MVLLSENASEGSNCTHPPAQVNISKAILLGVILGGLIIFGVLGNILVILSVACHRHLHSVTHYYIVNLAVADLLLTSTVLPFSAIFEILGYWAFGRVFCNIWAAVDVLCCTASIMGLCIISIDRYIGVSYPLRYPTIVTQRRGVRALLCVWALSLVISIGPLFGWRQQAPEDETICQINEEPGYVLFSALGSFYVPLTIILVMYCRVYVVAKRESRGLKSGLKTDKSDSEQVTLRIHRKNVPAEGSGVSSAKNKTHFSVRLLKFSREKKAAKTLGIVVGCFVLCWLPFFLVMPIGSFFPNFKPPETVFKIVFWLGYLNSCINPIIYPCSSQEFKKAFQNVLRIQCLRRRQSSKHALGYTLHPPSQAVEGQHRGMVRIPVGSGETFYKISKTDGVREWKFFSSMPQGSARITMPKDQSACTTARVRSKSFLQVCCCVGSSTPRPEENHQVPTIKIHTISLGENGEEV.

Topologically, residues 1–27 (MVLLSENASEGSNCTHPPAQVNISKAI) are extracellular. N-linked (GlcNAc...) asparagine glycosylation is found at asparagine 7, asparagine 13, and asparagine 22. Residues 28–51 (LLGVILGGLIIFGVLGNILVILSV) form a helical membrane-spanning segment. Residues 52–64 (ACHRHLHSVTHYY) are Cytoplasmic-facing. Residues 65–88 (IVNLAVADLLLTSTVLPFSAIFEI) form a helical membrane-spanning segment. At 89-99 (LGYWAFGRVFC) the chain is on the extracellular side. Cysteines 99 and 176 form a disulfide. Residues 100-122 (NIWAAVDVLCCTASIMGLCIISI) form a helical membrane-spanning segment. The Cytoplasmic portion of the chain corresponds to 123–143 (DRYIGVSYPLRYPTIVTQRRG). A helical membrane pass occupies residues 144–167 (VRALLCVWALSLVISIGPLFGWRQ). At 168 to 181 (QAPEDETICQINEE) the chain is on the extracellular side. Residues 182–205 (PGYVLFSALGSFYVPLTIILVMYC) traverse the membrane as a helical segment. At 206–273 (RVYVVAKRES…FSREKKAAKT (68 aa)) the chain is on the cytoplasmic side. Position 215 is a phosphoserine; by PKA (serine 215). A helical membrane pass occupies residues 274-297 (LGIVVGCFVLCWLPFFLVMPIGSF). Residues 298–305 (FPNFKPPE) are Extracellular-facing. The chain crosses the membrane as a helical span at residues 306 to 329 (TVFKIVFWLGYLNSCINPIIYPCS). Residues 330–466 (SQEFKKAFQN…ISLGENGEEV (137 aa)) lie on the Cytoplasmic side of the membrane. The Nuclear localization signal motif lies at 334–349 (KKAFQNVLRIQCLRRR). Residue cysteine 345 is the site of S-palmitoyl cysteine attachment.

Belongs to the G-protein coupled receptor 1 family. Adrenergic receptor subfamily. ADRA1A sub-subfamily. As to quaternary structure, homo- and heterooligomer. Heterooligomerizes with ADRA1B homooligomers in cardiac myocytes. Interacts with CAVIN4.

The protein localises to the nucleus membrane. It localises to the cell membrane. The protein resides in the cytoplasm. Its subcellular location is the membrane. It is found in the caveola. Its function is as follows. This alpha-adrenergic receptor mediates its action by association with G proteins that activate a phosphatidylinositol-calcium second messenger system. Its effect is mediated by G(q) and G(11) proteins. Nuclear ADRA1A-ADRA1B heterooligomers regulate phenylephrine (PE)-stimulated ERK signaling in cardiac myocytes. This is Alpha-1A adrenergic receptor (Adra1a) from Mus musculus (Mouse).